The chain runs to 826 residues: Lysine-specific histone demethylase 1B (826 aa).

Residues 1 to 11 are compositionally biased toward basic residues; the sequence is MAASRGRSKKR. Residues 1-46 form a disordered region; sequence MAASRGRSKKRSNLELSPDNLPLRSSGRQAKKKAVEIPDEDEDGSS. Residues serine 17 and serine 26 each carry the phosphoserine modification. Zn(2+) is bound by residues cysteine 53, cysteine 58, cysteine 65, cysteine 73, histidine 84, histidine 90, cysteine 92, cysteine 95, cysteine 142, cysteine 147, cysteine 169, and cysteine 185. The CW-type zinc finger occupies 133-193; sequence DQQLPYWVQC…HCSFPEDLRV (61 aa). Serine 253 bears the Phosphoserine mark. Positions 279–298 are GLYR1-binding; it reads YQPNECGKALCVRPDVMELD. The region spanning 281-379 is the SWIRM domain; it reads PNECGKALCV…TGVLTVAAGQ (99 aa). Residue 389 to 445 participates in FAD binding; the sequence is KSVLVVGAGPAGLAAARQLHNFGMKVTVLEAKDRIGGRVWDDKSFKGVVVGRGPQIV. Histone H3-binding regions lie at residues 444–473, 493–504, and 544–578; these read IVNGCINNPVALMCEQLGISMRKLGERCDL, FNALLDVVSEWR, and FHLSNLEYACGSSLHQVSARSWDHNEFFAQFAGDH. Residues 570–572 form a GLYR1-binding region; sequence FFA. FAD is bound by residues valine 604, glutamate 799, and 807–809; that span reads QTV. Positions 802-818 are GLYR1-binding; it reads NRHFPQTVTGAYLSGVR.

The protein belongs to the flavin monoamine oxidase family. Interacts with its cofactor GLYR1 at nucleosomes; this interaction stimulates H3K4me1 and H3K4me2 demethylation. In contrast to KDM1A, does not form a complex with RCOR1/CoREST. Possible accessory component of the polycomb repressive deubiquitinase (PR-DUB) complex, at least composed of BAP1, one of ASXL1, ASXL2 or (probably) ASXL3 and one of MBD5 or MBD6. The PR-DUB core associates with a number of accessory proteins, including FOXK1, FOXK2, KDM1B, HCFC1 and OGT; KDM1B specifically associates with ASXL2 PR-DUB complexes. It depends on FAD as a cofactor. Zn(2+) serves as cofactor. Expressed in growing oocytes and in intestinal gland.

The protein resides in the nucleus. The protein localises to the chromosome. The enzyme catalyses N(6),N(6)-dimethyl-L-lysyl(4)-[histone H3] + 2 A + 2 H2O = L-lysyl(4)-[histone H3] + 2 formaldehyde + 2 AH2. It carries out the reaction N(6)-methyl-L-lysyl(4)-[histone H3] + A + H2O = L-lysyl(4)-[histone H3] + formaldehyde + AH2. Its activity is regulated as follows. Inhibited by tranylcypromine, but not by pargyline, deprenyl or rasagiline. Histone H3K4me1 and H3K4me2 demethylase activity is inhibited by DNA, this inhibition is released in complex with GLYR1. Histone demethylase that demethylates 'Lys-4' of histone H3, a specific tag for epigenetic transcriptional activation, thereby acting as a corepressor. Required for de novo DNA methylation of a subset of imprinted genes during oogenesis. Acts by oxidizing the substrate by FAD to generate the corresponding imine that is subsequently hydrolyzed. Demethylates both mono- and di-methylated 'Lys-4' of histone H3. Has no effect on tri-methylated 'Lys-4', mono-, di- or tri-methylated 'Lys-9', mono-, di- or tri-methylated 'Lys-27', mono-, di- or tri-methylated 'Lys-36' of histone H3, or on mono-, di- or tri-methylated 'Lys-20' of histone H4. Functionally, histone demethylase that demethylates 'Lys-4' of histone H3, a specific tag for epigenetic transcriptional activation, thereby acting as a corepressor. Required for de novo DNA methylation of a subset of imprinted genes during oogenesis. Acts by oxidizing the substrate by FAD to generate the corresponding imine that is subsequently hydrolyzed. Demethylates both mono- and di-methylated 'Lys-4' of histone H3. Has no effect on tri-methylated 'Lys-4', mono-, di- or tri-methylated 'Lys-9', mono-, di- or tri-methylated 'Lys-27', mono-, di- or tri-methylated 'Lys-36' of histone H3, or on mono-, di- or tri-methylated 'Lys-20' of histone H4. Alone, it is unable to demethylate H3K4me on nucleosomes and requires the presence of GLYR1 to achieve such activity, they form a multifunctional enzyme complex that modifies transcribed chromatin and facilitates Pol II transcription through nucleosomes. This is Lysine-specific histone demethylase 1B from Mus musculus (Mouse).